A 166-amino-acid chain; its full sequence is UPF0336 protein MT0525.1 (166 aa).

The MaoC-like domain maps to 8-131 (QTLIGKHYRA…VLAEIRSEVT (124 aa)).

It belongs to the UPF0336 family.

In Mycobacterium tuberculosis (strain CDC 1551 / Oshkosh), this protein is UPF0336 protein MT0525.1.